A 414-amino-acid polypeptide reads, in one-letter code: Glutamyl-tRNA reductase (414 aa).

Substrate-binding positions include 49–52, S108, 113–115, and Q119; these read TCNR and EPQ. The Nucleophile role is filled by C50. Residue 188–193 coordinates NADP(+); it reads GAGQTG.

It belongs to the glutamyl-tRNA reductase family. Homodimer.

It carries out the reaction (S)-4-amino-5-oxopentanoate + tRNA(Glu) + NADP(+) = L-glutamyl-tRNA(Glu) + NADPH + H(+). The protein operates within porphyrin-containing compound metabolism; protoporphyrin-IX biosynthesis; 5-aminolevulinate from L-glutamyl-tRNA(Glu): step 1/2. In terms of biological role, catalyzes the NADPH-dependent reduction of glutamyl-tRNA(Glu) to glutamate 1-semialdehyde (GSA). The chain is Glutamyl-tRNA reductase from Francisella tularensis subsp. novicida (strain U112).